A 313-amino-acid chain; its full sequence is Synaptophysin (313 aa).

Residues Met-1 to Pro-25 are Cytoplasmic-facing. Residues Val-21–Gly-227 enclose the MARVEL domain. The helical transmembrane segment at Leu-26–Gly-49 threads the bilayer. Residues Glu-50–Phe-106 lie on the Vesicular side of the membrane. Residue Asn-59 is glycosylated (N-linked (GlcNAc...) asparagine). Tyr-81 carries the phosphotyrosine modification. An N-linked (GlcNAc...) asparagine glycan is attached at Asn-99. The chain crosses the membrane as a helical span at residues Phe-107–Asn-130. Residues Lys-131–Lys-137 lie on the Cytoplasmic side of the membrane. The helical transmembrane segment at Gly-138–Ala-161 threads the bilayer. Residues Lys-162–Ser-199 are Vesicular-facing. A helical membrane pass occupies residues Gly-200–Phe-223. Residues Lys-224–Met-313 lie on the Cytoplasmic side of the membrane. Residues Gly-238–Met-313 are disordered. The segment covering Ala-253–Gly-263 has biased composition (gly residues). The segment at Gly-254–Gly-304 is repeats, Gly/Tyr-rich. A compositionally biased stretch (low complexity) spans Pro-264 to Ser-283. A compositionally biased stretch (gly residues) spans Ser-284–Pro-302.

This sequence belongs to the synaptophysin/synaptobrevin family. Homohexamer or homotetramer. Interacts with SRCIN1. Interacts with VAMP2; the interaction is inhibited by interaction of VAPM2 with SEPT8. Ubiquitinated; mediated by SIAH1 or SIAH2 and leading to its subsequent proteasomal degradation. In terms of processing, phosphorylated by SRC. Characteristic of a type of small (30-80 nm) neurosecretory vesicles, including presynaptic vesicles, but also vesicles of various neuroendocrine cells of both neuronal and epithelial phenotype.

Its subcellular location is the cytoplasmic vesicle. The protein localises to the secretory vesicle. The protein resides in the synaptic vesicle membrane. It is found in the synapse. It localises to the synaptosome. Possibly involved in structural functions as organizing other membrane components or in targeting the vesicles to the plasma membrane. Involved in the regulation of short-term and long-term synaptic plasticity. This is Synaptophysin (SYP) from Bos taurus (Bovine).